The primary structure comprises 329 residues: Beta-tectorin (329 aa).

Positions 1 to 17 (MVTKAFVLLAIFAEASA) are cleaved as a signal peptide. The region spanning 19–283 (SCAPNKADVI…LSCPVTCDKR (265 aa)) is the ZP domain. N-linked (GlcNAc...) asparagine glycans are attached at residues asparagine 80, asparagine 104, asparagine 116, and asparagine 145. A disulfide bridge connects residues cysteine 204 and cysteine 264. Glycine 305 carries the GPI-anchor amidated glycine lipid modification. Residues 306–329 (FSSLYSFSDVLHHLIMMLGICAVL) constitute a propeptide, removed in mature form.

As to quaternary structure, may form homomeric filament after self-association or heteromeric filament after association with alpha-tectorin. Interacts with CEACAM16. The presence of a hydrophobic C-terminus preceded by a potential cleavage site strongly suggests that tectorins are synthesized as glycosylphosphatidylinositol-linked, membrane-bound precursors. Tectorins are targeted to the apical surface of the inner ear epithelia by the lipid and proteolytically released into the extracellular compartment.

The protein localises to the cell membrane. It is found in the secreted. The protein resides in the extracellular space. It localises to the extracellular matrix. In terms of biological role, one of the major non-collagenous components of the tectorial membrane. The tectorial membrane is an extracellular matrix of the inner ear that covers the neuroepithelium of the cochlea and contacts the stereocilia bundles of specialized sensory hair cells. Sound induces movement of these hair cells relative to the tectorial membrane, deflects the stereocilia and leads to fluctuations in hair-cell membrane potential, transducing sound into electrical signals. This chain is Beta-tectorin (TECTB), found in Homo sapiens (Human).